The primary structure comprises 682 residues: DNA-directed RNA polymerase subunit beta' (682 aa).

Zn(2+) is bound by residues Cys69, Cys71, Cys87, and Cys90. Positions 489, 491, and 493 each coordinate Mg(2+).

This sequence belongs to the RNA polymerase beta' chain family. RpoC1 subfamily. As to quaternary structure, in plastids the minimal PEP RNA polymerase catalytic core is composed of four subunits: alpha, beta, beta', and beta''. When a (nuclear-encoded) sigma factor is associated with the core the holoenzyme is formed, which can initiate transcription. The cofactor is Mg(2+). Requires Zn(2+) as cofactor.

It localises to the plastid. The protein resides in the chloroplast. It catalyses the reaction RNA(n) + a ribonucleoside 5'-triphosphate = RNA(n+1) + diphosphate. DNA-dependent RNA polymerase catalyzes the transcription of DNA into RNA using the four ribonucleoside triphosphates as substrates. The sequence is that of DNA-directed RNA polymerase subunit beta' from Acorus calamus var. americanus (American sweet flag).